We begin with the raw amino-acid sequence, 333 residues long: GTP 3',8-cyclase (333 aa).

Positions 7–221 constitute a Radical SAM core domain; that stretch reads KFGRVHDYIR…FEACDAIGFE (215 aa). Arg16 contacts GTP. Residues Cys23 and Cys27 each contribute to the [4Fe-4S] cluster site. Tyr29 contacts S-adenosyl-L-methionine. Cys30 lines the [4Fe-4S] cluster pocket. Arg66 lines the GTP pocket. Residue Gly70 participates in S-adenosyl-L-methionine binding. Thr97 provides a ligand contact to GTP. Ser121 is a binding site for S-adenosyl-L-methionine. Position 158 (Lys158) interacts with GTP. Residue Met192 coordinates S-adenosyl-L-methionine. Residues Cys257 and Cys260 each coordinate [4Fe-4S] cluster. Position 262–264 (262–264) interacts with GTP; that stretch reads RLR. Cys274 contributes to the [4Fe-4S] cluster binding site.

This sequence belongs to the radical SAM superfamily. MoaA family. In terms of assembly, monomer and homodimer. [4Fe-4S] cluster is required as a cofactor.

The catalysed reaction is GTP + AH2 + S-adenosyl-L-methionine = (8S)-3',8-cyclo-7,8-dihydroguanosine 5'-triphosphate + 5'-deoxyadenosine + L-methionine + A + H(+). Its pathway is cofactor biosynthesis; molybdopterin biosynthesis. Functionally, catalyzes the cyclization of GTP to (8S)-3',8-cyclo-7,8-dihydroguanosine 5'-triphosphate. The chain is GTP 3',8-cyclase from Listeria welshimeri serovar 6b (strain ATCC 35897 / DSM 20650 / CCUG 15529 / CIP 8149 / NCTC 11857 / SLCC 5334 / V8).